The following is a 139-amino-acid chain: Transcription antitermination protein NusB (139 aa).

Belongs to the NusB family.

Functionally, involved in transcription antitermination. Required for transcription of ribosomal RNA (rRNA) genes. Binds specifically to the boxA antiterminator sequence of the ribosomal RNA (rrn) operons. This chain is Transcription antitermination protein NusB, found in Klebsiella pneumoniae (strain 342).